Consider the following 556-residue polypeptide: MGGNLGCHRSIPKDPSDLCQKSRKYSAACNFSNILVSQERLNINTATEEELMTLPGVTRQVAQNIVEYREYIGGFKKVEDLALVSGVGAAKLEQVKFEICVSSKGGSSQHSPNSLRKDTEYGQHLSAARLNLNTASASQLMNLRGLTQEMVEDIVQYRSQQGPLKSIEDLVKVDSISPSFLDKIRHQVYVQRSRPSSAHTNGGLHFMAKPHPSPTSISLHSEDLDFPPGGPTQFISTRPPVELFGGEREGKPVLRVATWNLQNCSLDKANNPGVREVVCMTLLENSIKLLAVQELSDKDALEKLCTELNQPSLPNIRKWKGMRGSWKCIISEKSLCGPSEKEEYFGFLWDVSAGIELKNVNLSENMQTNGNGKHMYLQPYIAHFKVGTCDLTLVNIHLSPPTVETVKHQNDTYKSAVFGQALQETLKNERDVIILGCFSLPADSSEFDVLRKEKFHCLLPLNTFTNISTKNPQGNKSLDNIWISKSLKKIFTGYSLVVREGLTNPWIPDNWSWGGVASEHCPVLAEFYMDRDCNKKEMATKANGMTVERNDTKHER.

The HhH domain occupies 39–68; it reads ERLNINTATEEELMTLPGVTRQVAQNIVEY.

The chain is Endonuclease/exonuclease/phosphatase family domain-containing protein 1 (eepd1) from Xenopus laevis (African clawed frog).